Reading from the N-terminus, the 760-residue chain is Catalase-peroxidase (760 aa).

The segment at 1–24 (MAESKCPFKSQGSRSNVAGGGTRN) is disordered. The tryptophyl-tyrosyl-methioninium (Trp-Tyr) (with M-268) cross-link spans 96–242 (WHSAGTYRVF…LAAAHMGLIY (147 aa)). The active-site Proton acceptor is His97. Residues 242–268 (YVNPEGPDGNPDPVAAAHDIRVTFGRM) constitute a cross-link (tryptophyl-tyrosyl-methioninium (Tyr-Met) (with W-96)). His283 contributes to the heme b binding site.

It belongs to the peroxidase family. Peroxidase/catalase subfamily. Homodimer or homotetramer. Heme b is required as a cofactor. Post-translationally, formation of the three residue Trp-Tyr-Met cross-link is important for the catalase, but not the peroxidase activity of the enzyme.

It localises to the cytoplasm. It catalyses the reaction H2O2 + AH2 = A + 2 H2O. It carries out the reaction 2 H2O2 = O2 + 2 H2O. Its function is as follows. Bifunctional enzyme with both catalase and broad-spectrum peroxidase activity. In Aspergillus clavatus (strain ATCC 1007 / CBS 513.65 / DSM 816 / NCTC 3887 / NRRL 1 / QM 1276 / 107), this protein is Catalase-peroxidase.